A 529-amino-acid polypeptide reads, in one-letter code: CTP synthase (529 aa).

The segment at 1–266 (MTKYIIVTGG…TKKIFNKLGL (266 aa)) is amidoligase domain. Serine 13 serves as a coordination point for CTP. Residue serine 13 coordinates UTP. 14–19 (SVGKGT) provides a ligand contact to ATP. Tyrosine 54 provides a ligand contact to L-glutamine. Aspartate 71 contacts ATP. Residues aspartate 71 and glutamate 141 each contribute to the Mg(2+) site. CTP is bound by residues 148 to 150 (DIE), 187 to 192 (KTKPLQ), and lysine 223. Residues 187-192 (KTKPLQ) and lysine 223 each bind UTP. The 239-residue stretch at 291–529 (KIALVGKYTK…FLNFLSVASA (239 aa)) folds into the Glutamine amidotransferase type-1 domain. Glycine 354 lines the L-glutamine pocket. The active-site Nucleophile; for glutamine hydrolysis is the cysteine 381. L-glutamine is bound by residues 382-385 (FGMQ), glutamate 405, and arginine 462. Catalysis depends on residues histidine 506 and glutamate 508.

It belongs to the CTP synthase family. As to quaternary structure, homotetramer.

The enzyme catalyses UTP + L-glutamine + ATP + H2O = CTP + L-glutamate + ADP + phosphate + 2 H(+). It carries out the reaction L-glutamine + H2O = L-glutamate + NH4(+). The catalysed reaction is UTP + NH4(+) + ATP = CTP + ADP + phosphate + 2 H(+). Its pathway is pyrimidine metabolism; CTP biosynthesis via de novo pathway; CTP from UDP: step 2/2. Allosterically activated by GTP, when glutamine is the substrate; GTP has no effect on the reaction when ammonia is the substrate. The allosteric effector GTP functions by stabilizing the protein conformation that binds the tetrahedral intermediate(s) formed during glutamine hydrolysis. Inhibited by the product CTP, via allosteric rather than competitive inhibition. Its function is as follows. Catalyzes the ATP-dependent amination of UTP to CTP with either L-glutamine or ammonia as the source of nitrogen. Regulates intracellular CTP levels through interactions with the four ribonucleotide triphosphates. This Sulfolobus acidocaldarius (strain ATCC 33909 / DSM 639 / JCM 8929 / NBRC 15157 / NCIMB 11770) protein is CTP synthase.